A 465-amino-acid chain; its full sequence is Tapasin (465 aa).

Positions 1–23 (MKPLLLLVAVALGLATVVSVVSA) are cleaved as a signal peptide. Topologically, residues 24 to 416 (GPEAIECWFV…GFSGPSIEDG (393 aa)) are lumenal. Cysteines 30 and 94 form a disulfide. N-linked (GlcNAc...) asparagine glycosylation is present at asparagine 256. An Ig-like C1-type domain is found at 295–402 (PRVSLTPAPV…PASGRSADVT (108 aa)). Cysteine 318 and cysteine 385 are oxidised to a cystine. Residues 417-437 (IGLFLSAFLLLGLLKVLGWLA) form a helical membrane-spanning segment. At 438 to 465 (AYWTIPEVSKEKATAASLTIPRNSKKSQ) the chain is on the cytoplasmic side.

Heterodimer with PDIA3; disulfide-linked. Obligatory mediator for the interaction between newly assembled MHC class I molecules, calreticulin, PDIA3 and TAP. Up to 4 MHC class I/tapasin complexes bind to 1 TAP. Interacts with HLA-G-B2M complex; this interaction is required for loading of high affinity peptides. On its own or as part of MHC class I peptide loading complex, interacts with ligand-free MR1 or MR1-B2M complex, providing for stable MR1 pools ready for metabolite antigen processing.

The protein localises to the endoplasmic reticulum membrane. Its function is as follows. Involved in the association of MHC class I with transporter associated with antigen processing (TAP) and in the assembly of MHC class I with peptide (peptide loading). This Mus musculus (Mouse) protein is Tapasin (Tapbp).